We begin with the raw amino-acid sequence, 171 residues long: Mitochondrial import inner membrane translocase subunit Tim17-A (171 aa).

The cysteines at positions 9 and 78 are disulfide-linked. 3 helical membrane-spanning segments follow: residues 17–37 (CGGA…FKGF), 63–77 (GGSF…STID), and 113–133 (VGSA…GILL). Positions 144–171 (GPQFTEDHSQLPSSQLPSSPFGDYRQYQ) are disordered. Residues 153-163 (QLPSSQLPSSP) show a composition bias toward low complexity.

Belongs to the Tim17/Tim22/Tim23 family. Component of the TIM23 complex at least composed of TIMM23, TIMM17 (TIMM17A or TIMM17B) and TIMM50. The complex interacts with the TIMM44 component of the PAM complex and with DNAJC15. In terms of processing, degraded by YMEL1 downstream of the integrated stress response (ISR).

The protein localises to the mitochondrion inner membrane. Its function is as follows. Essential component of the TIM23 complex, a complex that mediates the translocation of transit peptide-containing proteins across the mitochondrial inner membrane. The sequence is that of Mitochondrial import inner membrane translocase subunit Tim17-A (Timm17a) from Mus musculus (Mouse).